The primary structure comprises 217 residues: Vesicle-associated membrane protein 723 (217 aa).

The Cytoplasmic portion of the chain corresponds to 1–192; it reads MAQQSLFYSF…KWFQNMKIKL (192 aa). One can recognise a Longin domain in the interval 10–114; the sequence is FIARGTVILV…SLNKEFGSNL (105 aa). Residues 130–186 form the v-SNARE coiled-coil homology domain; sequence NLAKAKAQVSEVKSLMMENIEKVLARGVICEMLGSSESQPQAFYIKRTQMKRKKWFQ. A helical; Anchor for type IV membrane protein transmembrane segment spans residues 193–213; the sequence is IVLAIIIALILIIILSVCGGF. At 214-217 the chain is on the vesicular side; sequence NCGK.

The protein belongs to the synaptobrevin family. In terms of tissue distribution, highly expressed in stems and roots. Detected in flowers and leaves.

It is found in the endoplasmic reticulum membrane. Involved in the targeting and/or fusion of transport vesicles to their target membrane. This is Vesicle-associated membrane protein 723 from Arabidopsis thaliana (Mouse-ear cress).